The primary structure comprises 188 residues: UPF0301 protein Tcr_1827 (188 aa).

It belongs to the UPF0301 (AlgH) family.

This is UPF0301 protein Tcr_1827 from Hydrogenovibrio crunogenus (strain DSM 25203 / XCL-2) (Thiomicrospira crunogena).